Consider the following 189-residue polypeptide: Ion-translocating oxidoreductase complex subunit B (189 aa).

A hydrophobic region spans residues Met1–Ala26. Residues Glu32–Val90 form the 4Fe-4S domain. Residues Cys49, Cys52, Cys57, Cys73, Cys114, Cys117, Cys120, Cys124, Cys144, Cys147, Cys150, and Cys154 each contribute to the [4Fe-4S] cluster site. 2 consecutive 4Fe-4S ferredoxin-type domains span residues Lys105–Lys134 and Leu135–Val164.

This sequence belongs to the 4Fe4S bacterial-type ferredoxin family. RnfB subfamily. As to quaternary structure, the complex is composed of six subunits: RnfA, RnfB, RnfC, RnfD, RnfE and RnfG. [4Fe-4S] cluster serves as cofactor.

Its subcellular location is the cell inner membrane. Its function is as follows. Part of a membrane-bound complex that couples electron transfer with translocation of ions across the membrane. The protein is Ion-translocating oxidoreductase complex subunit B of Shewanella pealeana (strain ATCC 700345 / ANG-SQ1).